The primary structure comprises 291 residues: Ribosomal RNA small subunit methyltransferase A (291 aa).

Positions 28, 30, 55, 77, 103, and 123 each coordinate S-adenosyl-L-methionine.

This sequence belongs to the class I-like SAM-binding methyltransferase superfamily. rRNA adenine N(6)-methyltransferase family. RsmA subfamily.

The protein localises to the cytoplasm. The enzyme catalyses adenosine(1518)/adenosine(1519) in 16S rRNA + 4 S-adenosyl-L-methionine = N(6)-dimethyladenosine(1518)/N(6)-dimethyladenosine(1519) in 16S rRNA + 4 S-adenosyl-L-homocysteine + 4 H(+). Specifically dimethylates two adjacent adenosines (A1518 and A1519) in the loop of a conserved hairpin near the 3'-end of 16S rRNA in the 30S particle. May play a critical role in biogenesis of 30S subunits. The protein is Ribosomal RNA small subunit methyltransferase A of Azorhizobium caulinodans (strain ATCC 43989 / DSM 5975 / JCM 20966 / LMG 6465 / NBRC 14845 / NCIMB 13405 / ORS 571).